The chain runs to 639 residues: DNA primase (639 aa).

A CHC2-type zinc finger spans residues 41 to 65 (CPFHNEKSPSFHVRPNHGHFHCFGC). Positions 262-348 (HQAVVVEGYT…AGQSFVAVAP (87 aa)) constitute a Toprim domain. Residues glutamate 268, aspartate 319, and aspartate 321 each contribute to the Mg(2+) site. Residues 460-479 (RAAQRPTAGPPTELAVRPDP) are disordered.

The protein belongs to the DnaG primase family. Monomer. Interacts with DnaB. The cofactor is Zn(2+). Mg(2+) is required as a cofactor.

It carries out the reaction ssDNA + n NTP = ssDNA/pppN(pN)n-1 hybrid + (n-1) diphosphate.. RNA polymerase that catalyzes the synthesis of short RNA molecules used as primers for DNA polymerase during DNA replication. The protein is DNA primase of Mycobacterium bovis (strain ATCC BAA-935 / AF2122/97).